The primary structure comprises 389 residues: Phosphopentomutase (389 aa).

6 residues coordinate Mn(2+): D9, D282, H287, D323, H324, and H335.

Belongs to the phosphopentomutase family. Requires Mn(2+) as cofactor.

The protein resides in the cytoplasm. It catalyses the reaction 2-deoxy-alpha-D-ribose 1-phosphate = 2-deoxy-D-ribose 5-phosphate. It carries out the reaction alpha-D-ribose 1-phosphate = D-ribose 5-phosphate. It functions in the pathway carbohydrate degradation; 2-deoxy-D-ribose 1-phosphate degradation; D-glyceraldehyde 3-phosphate and acetaldehyde from 2-deoxy-alpha-D-ribose 1-phosphate: step 1/2. Functionally, isomerase that catalyzes the conversion of deoxy-ribose 1-phosphate (dRib-1-P) and ribose 1-phosphate (Rib-1-P) to deoxy-ribose 5-phosphate (dRib-5-P) and ribose 5-phosphate (Rib-5-P), respectively. This is Phosphopentomutase from Pseudothermotoga lettingae (strain ATCC BAA-301 / DSM 14385 / NBRC 107922 / TMO) (Thermotoga lettingae).